Here is a 504-residue protein sequence, read N- to C-terminus: Maturase K (504 aa).

Belongs to the intron maturase 2 family. MatK subfamily.

The protein resides in the plastid. Its subcellular location is the chloroplast. In terms of biological role, usually encoded in the trnK tRNA gene intron. Probably assists in splicing its own and other chloroplast group II introns. The polypeptide is Maturase K (Wollastonia biflora (Beach sunflower)).